Here is a 539-residue protein sequence, read N- to C-terminus: O-phosphoserine--tRNA(Cys) ligase (539 aa).

Substrate contacts are provided by residues His188–Thr190, Ser233–Ser235, Tyr275–Tyr276, and Asn327.

The protein belongs to the class-II aminoacyl-tRNA synthetase family. O-phosphoseryl-tRNA(Cys) synthetase subfamily. In terms of assembly, homotetramer. Interacts with SepCysS.

It catalyses the reaction tRNA(Cys) + O-phospho-L-serine + ATP = O-phospho-L-seryl-tRNA(Cys) + AMP + diphosphate. In terms of biological role, catalyzes the attachment of O-phosphoserine (Sep) to tRNA(Cys). The protein is O-phosphoserine--tRNA(Cys) ligase of Methanosarcina acetivorans (strain ATCC 35395 / DSM 2834 / JCM 12185 / C2A).